Reading from the N-terminus, the 54-residue chain is Low temperature-induced protein lt101.2 (54 aa).

Transmembrane regions (helical) follow at residues 2–22 and 34–54; these read ASAT…GVFL and LLLT…VLVA.

It belongs to the UPF0057 (PMP3) family.

It is found in the membrane. This chain is Low temperature-induced protein lt101.2 (LT101.2), found in Hordeum vulgare (Barley).